A 4303-amino-acid polypeptide reads, in one-letter code: Polycystin-1 (4303 aa).

The signal sequence occupies residues 1–23 (MPPAAPARLALALGLGLWLGALA). Positions 24–67 (GGPGRGCGPCEPPCLCGPAPGAACRVNCSGRGLRTLGPALRIPA) constitute an LRRNT domain. The Extracellular segment spans residues 24-3074 (GGPGRGCGPC…VFPEPTADVN (3051 aa)). N50 and N89 each carry an N-linked (GlcNAc...) asparagine glycan. LRR repeat units lie at residues 68 to 91 (DATALDVSHNLLRALDVGLLANLS) and 92 to 113 (ALAELDISNNKISTLEEGIFAN). N116 and N121 each carry an N-linked (GlcNAc...) asparagine glycan. In terms of domain architecture, LRRCT spans 125 to 178 (NPFECDCGLAWLPRWAEEQQVRVVQPEAATCAGPGSLAGQPLLGIPLLDSGCGE). The 95-residue stretch at 177–271 (GEEYVACLPD…PTLLQHVFPA (95 aa)) folds into the WSC domain. N187 carries N-linked (GlcNAc...) asparagine glycosylation. In terms of domain architecture, PKD 1 spans 272-359 (SPGATLVGPH…VQVEAAPAAL (88 aa)). The region spanning 415 to 531 (GNGHCYRLVV…CSAPHSYVCE (117 aa)) is the C-type lectin domain. 2 disulfides stabilise this stretch: C436–C530 and C508–C522. The disordered stretch occupies residues 616 to 635 (AGTPENGSEPESRSPDNRTQ). 2 N-linked (GlcNAc...) asparagine glycosylation sites follow: N621 and N632. Residues 638–671 (PACMPGGRWCPGANICLPLDASCHPQACANGCTS) enclose the LDL-receptor class A; atypical domain. 3 disulfide bridges follow: C640-C653, C647-C665, and C660-C669. The 75-residue stretch at 743–817 (LSANASSWLP…RHNLSCSFDV (75 aa)) folds into the PKD 2 domain. Residues N746, N810, N841, N854, N890, N921, N1004, N1010, N1034, N1072, N1113, N1178, N1194, N1240, N1269, N1336, N1348, N1382, N1450, N1455, N1474, N1518, N1541, N1554, N1563, N1647, N1661, N1733, N1791, N1834, N1867, and N1880 are each glycosylated (N-linked (GlcNAc...) asparagine). 15 consecutive PKD domains span residues 855–928 (ATAT…RVTA), 935–1020 (LRAT…NRMQ), 1023–1129 (QVST…LPSV), 1127–1215 (PSVA…LRGL), 1213–1298 (RGLS…EVLR), 1294–1383 (LEVL…VGNV), 1382–1469 (NVTL…VLVT), 1468–1551 (VTSI…VRGL), 1550–1635 (GLVV…IEGL), 1634–1721 (GLQV…VGWL), 1719–1805 (GWLM…VSGL), 1807–1890 (IRAS…IVGL), 1889–1974 (GLVL…VSGL), 1977–2057 (PNCC…VLEV), and 2060–2148 (AVQY…ACRE). N-linked (GlcNAc...) asparagine glycans are attached at residues N1991, N2050, N2074, N2125, N2248, N2353, N2395, N2412, N2567, N2578, N2645, N2718, N2754, N2841, N2878, N2925, N2956, and N2994. Residues 2146 to 2833 (CREPEVDVVL…QLIFLVDSNP (688 aa)) form the REJ domain. The region spanning 2862-3063 (PIERLASERA…SLFVPPSHVR (202 aa)) is the GAIN-B domain. A disulfide bridge connects residues C3015 and C3043. The GPS stretch occupies residues 3015 to 3063 (CQYFSEEDMVWRTEGLLPLEETSPRQAVCLTRHLTAFGASLFVPPSHVR). The helical transmembrane segment at 3075 to 3095 (YIVMLTCAVCLVTYMVMAAIL) threads the bilayer. Topologically, residues 3096 to 3277 (HKLDQLDASR…DRPPRSRFTR (182 aa)) are cytoplasmic. The PLAT domain occupies 3118–3233 (FKYEILVKTG…EANGGLVEKE (116 aa)). The chain crosses the membrane as a helical span at residues 3278–3298 (IQRATCCVLLICLFLGANAVW). Residues 3299-3323 (YGAVGDSAYSTGHVSRLSPLSVDTV) lie on the Extracellular side of the membrane. A helical transmembrane segment spans residues 3324–3344 (AVGLVSSVVVYPVYLAILFLF). Residues 3345-3559 (RMSRSKVAGS…LPAWCASLAH (215 aa)) lie on the Cytoplasmic side of the membrane. Residues 3560 to 3580 (GLSLLLVAVAVAVSGWVGASF) form a helical membrane-spanning segment. At 3581–3582 (PP) the chain is on the extracellular side. Residues 3583-3603 (GVSVAWLLSSSASFLASFLGW) traverse the membrane as a helical segment. Residues 3604 to 3665 (EPLKVLLEAL…LAKEEARKVK (62 aa)) lie on the Cytoplasmic side of the membrane. Residues 3666 to 3686 (RLHGMLRSLLVYMLFLLVTLL) traverse the membrane as a helical segment. Over 3687-3901 (ASYGDASCHG…RLSAGLSLPL (215 aa)) the chain is Extracellular. Residues N3738, N3790, and N3845 are each glycosylated (N-linked (GlcNAc...) asparagine). The chain crosses the membrane as a helical span at residues 3902 to 3922 (LTSVCLLLFAVHFAVAEARTW). At 3923–3935 (HREGRWRVLRLGA) the chain is on the cytoplasmic side. A helical transmembrane segment spans residues 3936 to 3956 (WARWLLVALTAATALVRLAQL). Topologically, residues 3957-3984 (GAADRQWTRFVRGRPRRFTSFDQVAQLS) are extracellular. A helical membrane pass occupies residues 3985–4005 (SAARGLAASLLFLLLVKAAQQ). At 4006–4027 (LRFVRQWSVFGKTLCRALPELL) the chain is on the cytoplasmic side. A helical membrane pass occupies residues 4028 to 4048 (GVTLGLVVLGVAYAQLAILLV). The Extracellular segment spans residues 4049 to 4090 (SSCVDSLWSVAQALLVLCPGTGLSTLCPAESWHLSPLLCVGL). The chain crosses the membrane as a helical span at residues 4091–4110 (WALRLWGALRLGAVILRWRY). Residues 4111–4303 (HALRGELYRP…AKNKVHPSST (193 aa)) lie on the Cytoplasmic side of the membrane. 2 disordered regions span residues 4160–4196 (PLPSRSSRGSKVSPDVPPPSAGSDASHPSTSSSQLDG) and 4243–4303 (LHSL…PSST). Position 4166 is a phosphoserine; by PRKX; in vitro (S4166). A compositionally biased stretch (polar residues) spans 4185–4195 (SHPSTSSSQLD). Residues 4220–4251 (EALLTQFDRLNQATEDVYQLEQQLHSLQGRRS) are a coiled coil. The span at 4253–4269 (RAPAGSSRGPSPGLRPA) shows a compositional bias: low complexity. The span at 4292-4303 (LRAKNKVHPSST) shows a compositional bias: basic residues.

It belongs to the polycystin family. In terms of assembly, component of the heterotetrameric polycystin channel complex with PKD2; the tetramer contains one PKD1 chain and three PKD2 chains. Interacts with PKD2; the interaction is required for ciliary localization. Interacts with PKD2L1. Interacts with PRKX; involved in differentiation and controlled morphogenesis of the kidney. Interacts (via extracellular domain) with WNT3A, WNT4, WNT5A and WNT9B. Interacts with DVL1 and DVL2. Interacts with NPHP1 (via SH3 domain). Interacts with BBS1, BBS4, BBS5 and TTC8. Interacts with RGS7. Interacts (via the PKD repeats in the N-terminal extracellular region) with EPCIP; the interaction is not dependent on N-glycosylation of either protein. N-glycosylated. In terms of processing, after synthesis, undergoes cleavage between Leu-3048 and Thr-3049 in the GPS region of the GAIN-B domain. Cleavage at the GPS region occurs through a cis-autoproteolytic mechanism involving an ester-intermediate via N-O acyl rearrangement. This process takes place in the early secretory pathway, depends on initial N-glycosylation, and requires the REJ domain. There is evidence that cleavage at GPS region is incomplete. Uncleaved and cleaved products may have different functions in vivo.

It is found in the cell membrane. It localises to the cell projection. Its subcellular location is the cilium. The protein localises to the endoplasmic reticulum. The protein resides in the golgi apparatus. It is found in the vesicle. It localises to the secreted. Its subcellular location is the extracellular exosome. In terms of biological role, component of a heteromeric calcium-permeable ion channel formed by PKD1 and PKD2 that is activated by interaction between PKD1 and a Wnt family member, such as WNT3A and WNT9B. Both PKD1 and PKD2 are required for channel activity. Involved in renal tubulogenesis. Involved in fluid-flow mechanosensation by the primary cilium in renal epithelium. Acts as a regulator of cilium length, together with PKD2. The dynamic control of cilium length is essential in the regulation of mechanotransductive signaling. The cilium length response creates a negative feedback loop whereby fluid shear-mediated deflection of the primary cilium, which decreases intracellular cAMP, leads to cilium shortening and thus decreases flow-induced signaling. May be an ion-channel regulator. Involved in adhesive protein-protein and protein-carbohydrate interactions. Likely to be involved with polycystin-1-interacting protein 1 in the detection, sequestration and exocytosis of senescent mitochondria. This chain is Polycystin-1, found in Homo sapiens (Human).